The sequence spans 258 residues: Imidazole glycerol phosphate synthase subunit HisF (258 aa).

Residues Asp11 and Asp130 contribute to the active site.

It belongs to the HisA/HisF family. Heterodimer of HisH and HisF.

The protein resides in the cytoplasm. It carries out the reaction 5-[(5-phospho-1-deoxy-D-ribulos-1-ylimino)methylamino]-1-(5-phospho-beta-D-ribosyl)imidazole-4-carboxamide + L-glutamine = D-erythro-1-(imidazol-4-yl)glycerol 3-phosphate + 5-amino-1-(5-phospho-beta-D-ribosyl)imidazole-4-carboxamide + L-glutamate + H(+). It functions in the pathway amino-acid biosynthesis; L-histidine biosynthesis; L-histidine from 5-phospho-alpha-D-ribose 1-diphosphate: step 5/9. Its function is as follows. IGPS catalyzes the conversion of PRFAR and glutamine to IGP, AICAR and glutamate. The HisF subunit catalyzes the cyclization activity that produces IGP and AICAR from PRFAR using the ammonia provided by the HisH subunit. The protein is Imidazole glycerol phosphate synthase subunit HisF of Synechococcus sp. (strain CC9902).